The primary structure comprises 183 residues: Transmembrane and coiled-coil domain-containing protein 2 (183 aa).

The helical transmembrane segment at 54-74 (VQIILGISFLTLLAIGLFALW) threads the bilayer. The stretch at 127–150 (GLQEKILKKLQMVENKVRDLEGII) forms a coiled coil.

The protein localises to the membrane. This is Transmembrane and coiled-coil domain-containing protein 2 (Tmco2) from Mus musculus (Mouse).